The chain runs to 190 residues: COMM domain-containing protein 1 (190 aa).

Ala2 is modified (N-acetylalanine). A sufficient for interaction with SLC12A2 region spans residues 2–123 (AAGELEGGKP…RWNSGLRGLS (122 aa)). Cu cation contacts are provided by His101, Met110, and His134. Positions 118–186 (GLRGLSWRVD…EVEESISTLI (69 aa)) constitute a COMM domain. A required for binding to PtdIns(4,5)P2 region spans residues 125 to 190 (RVDGKSQSRH…SISTLISQPN (66 aa)).

The protein belongs to the COMM domain-containing protein 1 family. In terms of assembly, component of the commander complex consisting of the CCC subcomplex and the retriever subcomplex. Component of the CCC (COMMD/CCDC22/CCDC93) subcomplex consisting of COMMD1, COMMD2, COMMD3, COMMD4, COMMD5, COMMD6, COMMD7, COMMD8, COMMD9, COMMD10, CCDC22 and CCDC93; within the complex forms a heterodimer with COMMD6. Interacts with VPS35L; the interaction associates the CCC complex with the retriever complex. Identified in a complex with an E3 ubiquitin ligase complex composed of TCEB1/elongin C, CUL2, SOCS1 and RBX1; in the complex interacts directly with SOCS1 and CUL2. Identified in a complex with NF-kappa-B. Interacts directly with SLC12A2. Interacts directly with ATP7B (via the N-terminal region). Interacts with ATP7A. Interacts with FAM107A; this interaction stabilizes COMMD1 in the nucleus. Interacts with CCS, CDKN2A, RELA, REL, RELB, NFKB1/p105, NFKB2/p100, NFKBIB, SCNN1D, SCNN1B, CFTR, CLU, SGK1, AKT1, CUL1, CUL2, CUL3, CUL4A, CUL4B, CUL5, CUL7, HIF1A. Acetylated by EP300 ina stimuli-specific manner; protecting it from XIAP-mediated proteasomal degradation and required for interaction with RElA in response to stress. In terms of processing, ubiquitinated; undergoes both 'Lys-63'- and 'Lys-48'-linked polyubiquitination. Ubiquitinated by XIAP, leading to its proteasomal degradation. In terms of tissue distribution, ubiquitous. Highest expression in the liver, with lower expression in brain, lung, placenta, pancreas, small intestine, heart, skeletal muscle, kidney and placenta. Down-regulated in cancer tissues.

Its subcellular location is the nucleus. The protein resides in the cytoplasm. It is found in the endosome membrane. The protein localises to the cytoplasmic vesicle. It localises to the early endosome. Its subcellular location is the recycling endosome. Its function is as follows. Scaffold protein in the commander complex that is essential for endosomal recycling of transmembrane cargos; the commander complex is composed of the CCC subcomplex and the retriever subcomplex. Can modulate activity of cullin-RING E3 ubiquitin ligase (CRL) complexes by displacing CAND1; in vitro promotes CRL E3 activity and dissociates CAND1 from CUL1 and CUL2. Promotes ubiquitination of NF-kappa-B subunit RELA and its subsequent proteasomal degradation. Down-regulates NF-kappa-B activity. Involved in the regulation of membrane expression and ubiquitination of SLC12A2. Modulates Na(+) transport in epithelial cells by regulation of apical cell surface expression of amiloride-sensitive sodium channel (ENaC) subunits and by promoting their ubiquitination presumably involving NEDD4L. Promotes the localization of SCNN1D to recycling endosomes. Promotes CFTR cell surface expression through regulation of its ubiquitination. Down-regulates SOD1 activity by interfering with its homodimerization. Plays a role in copper ion homeostasis. Involved in copper-dependent ATP7A trafficking between the trans-Golgi network and vesicles in the cell periphery; the function is proposed to depend on its association within the CCC complex and cooperation with the WASH complex on early endosomes. Can bind one copper ion per monomer. May function to facilitate biliary copper excretion within hepatocytes. Binds to phosphatidylinositol 4,5-bisphosphate (PtdIns(4,5)P2). Involved in the regulation of HIF1A-mediated transcription; competes with ARNT/Hif-1-beta for binding to HIF1A resulting in decreased DNA binding and impaired transcriptional activation by HIF-1. Negatively regulates neuroblastoma G1/S phase cell cycle progression and cell proliferation by stimulating ubiquitination of NF-kappa-B subunit RELA and NF-kappa-B degradation in a FAM107A- and actin-dependent manner. The sequence is that of COMM domain-containing protein 1 (COMMD1) from Homo sapiens (Human).